A 310-amino-acid polypeptide reads, in one-letter code: Methionyl-tRNA formyltransferase (310 aa).

Residue 110–113 coordinates (6S)-5,6,7,8-tetrahydrofolate; it reads SLLP.

Belongs to the Fmt family.

The catalysed reaction is L-methionyl-tRNA(fMet) + (6R)-10-formyltetrahydrofolate = N-formyl-L-methionyl-tRNA(fMet) + (6S)-5,6,7,8-tetrahydrofolate + H(+). Its function is as follows. Attaches a formyl group to the free amino group of methionyl-tRNA(fMet). The formyl group appears to play a dual role in the initiator identity of N-formylmethionyl-tRNA by promoting its recognition by IF2 and preventing the misappropriation of this tRNA by the elongation apparatus. The chain is Methionyl-tRNA formyltransferase from Clostridium tetani (strain Massachusetts / E88).